Consider the following 240-residue polypeptide: Sec-independent protein translocase protein TatC (240 aa).

Helical transmembrane passes span 15-35, 61-81, 103-123, 152-172, 191-211, and 212-232; these read IISIIAFLIGSGIAFYFAKYV, LFILIKISLAVGFIIASPVIL, LLLGSILLFMLGALFAYFIVL, FVLKLVVAFGIAFEMPIVLYV, FIVIAFVIGAIIAPDVSTQVL, and MAIPLLLLYEISIFLGKLATR.

It belongs to the TatC family. Forms a complex with TatA.

The protein localises to the cell inner membrane. Part of the twin-arginine translocation (Tat) system that transports large folded proteins containing a characteristic twin-arginine motif in their signal peptide across membranes. This chain is Sec-independent protein translocase protein TatC, found in Aquifex aeolicus (strain VF5).